The primary structure comprises 413 residues: Gamma-glutamyl phosphate reductase (413 aa).

Belongs to the gamma-glutamyl phosphate reductase family.

It localises to the cytoplasm. The enzyme catalyses L-glutamate 5-semialdehyde + phosphate + NADP(+) = L-glutamyl 5-phosphate + NADPH + H(+). Its pathway is amino-acid biosynthesis; L-proline biosynthesis; L-glutamate 5-semialdehyde from L-glutamate: step 2/2. In terms of biological role, catalyzes the NADPH-dependent reduction of L-glutamate 5-phosphate into L-glutamate 5-semialdehyde and phosphate. The product spontaneously undergoes cyclization to form 1-pyrroline-5-carboxylate. In Thermus thermophilus (strain ATCC BAA-163 / DSM 7039 / HB27), this protein is Gamma-glutamyl phosphate reductase.